A 120-amino-acid chain; its full sequence is MFVNRRYTARGKNLPSSPKKVRPIADNIRGKPYTEAVAILYSMPNKGAKLLGKVVKSAASNAMYHNRNLSEDMIFVKTVMVDDGRKRRSIWPRARGRADRLVNRSCHIFVEVYEKMYGGE.

Residues 1 to 20 are disordered; it reads MFVNRRYTARGKNLPSSPKK.

Belongs to the universal ribosomal protein uL22 family. As to quaternary structure, part of the 50S ribosomal subunit.

This protein binds specifically to 23S rRNA; its binding is stimulated by other ribosomal proteins, e.g. L4, L17, and L20. It is important during the early stages of 50S assembly. It makes multiple contacts with different domains of the 23S rRNA in the assembled 50S subunit and ribosome. In terms of biological role, the globular domain of the protein is located near the polypeptide exit tunnel on the outside of the subunit, while an extended beta-hairpin is found that lines the wall of the exit tunnel in the center of the 70S ribosome. The sequence is that of Large ribosomal subunit protein uL22 from Borrelia hermsii (strain HS1 / DAH).